The chain runs to 136 residues: Galectin-7 (136 aa).

Positions histidine 6–phenylalanine 136 constitute a Galectin domain. An a beta-D-galactoside-binding site is contributed by tryptophan 70–glycine 76.

Monomer.

Its subcellular location is the cytoplasm. The protein resides in the nucleus. It localises to the secreted. Its function is as follows. Could be involved in cell-cell and/or cell-matrix interactions necessary for normal growth control. Pro-apoptotic protein that functions intracellularly upstream of JNK activation and cytochrome c release. The polypeptide is Galectin-7 (Lgals7) (Mus musculus (Mouse)).